Here is a 301-residue protein sequence, read N- to C-terminus: uncharacterized protein (301 aa).

Disordered regions lie at residues 167–186 (DVHL…PKER) and 225–244 (ASES…EGAS). Polar residues predominate over residues 170–181 (LNSTTPPHTAQV). Over residues 226–237 (SESSLETSSVSS) the composition is skewed to low complexity.

This is an uncharacterized protein from Mus musculus (Mouse).